The chain runs to 546 residues: uncharacterized protein (546 aa).

One can recognise an SLH domain in the interval 52-123 (SVAELRDVQP…NTIEQLLQEN (72 aa)).

The protein belongs to the OprB family.

This is an uncharacterized protein from Synechocystis sp. (strain ATCC 27184 / PCC 6803 / Kazusa).